Reading from the N-terminus, the 389-residue chain is S-adenosylmethionine synthase (389 aa).

His18 is a binding site for ATP. Asp20 is a Mg(2+) binding site. K(+) is bound at residue Glu46. Residues Glu59 and Gln103 each coordinate L-methionine. Residues 103–113 form a flexible loop region; sequence QSADIAMGVDS. Residues 168–170, Asp244, 250–251, Ala267, and Lys271 each bind ATP; these read DSK and RK. Asp244 provides a ligand contact to L-methionine. Position 275 (Lys275) interacts with L-methionine.

It belongs to the AdoMet synthase family. Homotetramer; dimer of dimers. Requires Mg(2+) as cofactor. K(+) serves as cofactor.

It localises to the cytoplasm. It catalyses the reaction L-methionine + ATP + H2O = S-adenosyl-L-methionine + phosphate + diphosphate. The protein operates within amino-acid biosynthesis; S-adenosyl-L-methionine biosynthesis; S-adenosyl-L-methionine from L-methionine: step 1/1. In terms of biological role, catalyzes the formation of S-adenosylmethionine (AdoMet) from methionine and ATP. The overall synthetic reaction is composed of two sequential steps, AdoMet formation and the subsequent tripolyphosphate hydrolysis which occurs prior to release of AdoMet from the enzyme. The sequence is that of S-adenosylmethionine synthase from Pelagibacter ubique (strain HTCC1062).